The chain runs to 238 residues: MSTAAPQENSPELKLSPSSKLNGFEWWRRTLSYQTGLGLNAEEKAQYEFDYNNRNLAEKCQQCNEYRNWMLEYSPSVLFMMDHIKKLTKDKEPILTKENITCDVCDFTKGGGFHPDEGILLCANWIRNKWQLEDILTHELVHVYDYLKFNLDMNNLRHHACTEIRASMLSGECRIWQEIKKTGLGNFGKKFQDCIKRRAVLSVSSNPICKSPEEAEKVVSTVWNSCFNDTRPFERVYR.

H138 is an a divalent metal cation binding site. E139 is a catalytic residue. H142 lines the a divalent metal cation pocket.

This sequence belongs to the peptidase M76 family.

Its subcellular location is the mitochondrion inner membrane. In terms of biological role, has a dual role in the assembly of mitochondrial ATPase. Acts as a protease that removes N-terminal residues of mitochondrial ATPase CF(0) subunit 6 at the intermembrane space side. Also involved in the correct assembly of the membrane-embedded ATPase CF(0) particle, probably mediating association of subunit 6 with the subunit 9 ring. This is Mitochondrial inner membrane protease ATP23 (ATP23) from Candida albicans (strain SC5314 / ATCC MYA-2876) (Yeast).